A 150-amino-acid chain; its full sequence is Large ribosomal subunit protein bL9 (150 aa).

It belongs to the bacterial ribosomal protein bL9 family.

Functionally, binds to the 23S rRNA. This Burkholderia vietnamiensis (strain G4 / LMG 22486) (Burkholderia cepacia (strain R1808)) protein is Large ribosomal subunit protein bL9.